The chain runs to 468 residues: ATP synthase subunit beta 3 (468 aa).

155–162 (GGAGVGKT) is a binding site for ATP.

The protein belongs to the ATPase alpha/beta chains family. As to quaternary structure, F-type ATPases have 2 components, CF(1) - the catalytic core - and CF(0) - the membrane proton channel. CF(1) has five subunits: alpha(3), beta(3), gamma(1), delta(1), epsilon(1). CF(0) has three main subunits: a(1), b(2) and c(9-12). The alpha and beta chains form an alternating ring which encloses part of the gamma chain. CF(1) is attached to CF(0) by a central stalk formed by the gamma and epsilon chains, while a peripheral stalk is formed by the delta and b chains.

It localises to the cell inner membrane. It carries out the reaction ATP + H2O + 4 H(+)(in) = ADP + phosphate + 5 H(+)(out). Functionally, produces ATP from ADP in the presence of a proton gradient across the membrane. The catalytic sites are hosted primarily by the beta subunits. This chain is ATP synthase subunit beta 3, found in Syntrophotalea carbinolica (strain DSM 2380 / NBRC 103641 / GraBd1) (Pelobacter carbinolicus).